The following is a 127-amino-acid chain: MSAQASPATELQNPTLGQVYATLTRHSAQQTEFIPHIFYALHQLKNDNGHTNTFETATSNIRHRLKLCKAAIAGDAHAVEMLSRPCDEWPAVVCQKEQEIEAKKRVHRQLRQRVEEIAGPLDAAAAP.

The stretch at Gln95–Gly119 forms a coiled coil.

Belongs to the Mediator complex subunit 9 family. As to quaternary structure, component of the Mediator complex.

The protein localises to the nucleus. In terms of biological role, component of the Mediator complex, a coactivator involved in the regulated transcription of nearly all RNA polymerase II-dependent genes. Mediator functions as a bridge to convey information from gene-specific regulatory proteins to the basal RNA polymerase II transcription machinery. Mediator is recruited to promoters by direct interactions with regulatory proteins and serves as a scaffold for the assembly of a functional preinitiation complex with RNA polymerase II and the general transcription factors. In Eremothecium gossypii (strain ATCC 10895 / CBS 109.51 / FGSC 9923 / NRRL Y-1056) (Yeast), this protein is Mediator of RNA polymerase II transcription subunit 9 (CSE2).